Reading from the N-terminus, the 128-residue chain is Large ribosomal subunit protein eL8 (128 aa).

It belongs to the eukaryotic ribosomal protein eL8 family. Part of the 50S ribosomal subunit. Probably part of the RNase P complex.

It is found in the cytoplasm. Multifunctional RNA-binding protein that recognizes the K-turn motif in ribosomal RNA, the RNA component of RNase P, box H/ACA, box C/D and box C'/D' sRNAs. This Staphylothermus marinus (strain ATCC 43588 / DSM 3639 / JCM 9404 / F1) protein is Large ribosomal subunit protein eL8.